The following is a 325-amino-acid chain: Acetyl-coenzyme A carboxylase carboxyl transferase subunit alpha (325 aa).

The CoA carboxyltransferase C-terminal domain maps to 44 to 298; the sequence is QLEARADQLR…KAAIQDNLQA (255 aa).

This sequence belongs to the AccA family. In terms of assembly, acetyl-CoA carboxylase is a heterohexamer composed of biotin carboxyl carrier protein (AccB), biotin carboxylase (AccC) and two subunits each of ACCase subunit alpha (AccA) and ACCase subunit beta (AccD).

It is found in the cytoplasm. It carries out the reaction N(6)-carboxybiotinyl-L-lysyl-[protein] + acetyl-CoA = N(6)-biotinyl-L-lysyl-[protein] + malonyl-CoA. It participates in lipid metabolism; malonyl-CoA biosynthesis; malonyl-CoA from acetyl-CoA: step 1/1. Component of the acetyl coenzyme A carboxylase (ACC) complex. First, biotin carboxylase catalyzes the carboxylation of biotin on its carrier protein (BCCP) and then the CO(2) group is transferred by the carboxyltransferase to acetyl-CoA to form malonyl-CoA. The protein is Acetyl-coenzyme A carboxylase carboxyl transferase subunit alpha of Picosynechococcus sp. (strain ATCC 27264 / PCC 7002 / PR-6) (Agmenellum quadruplicatum).